Here is a 156-residue protein sequence, read N- to C-terminus: ATP synthase subunit b (156 aa).

The helical transmembrane segment at 12–32 (IAFAIFVWFCVKYVWPPITAA) threads the bilayer.

Belongs to the ATPase B chain family. As to quaternary structure, F-type ATPases have 2 components, F(1) - the catalytic core - and F(0) - the membrane proton channel. F(1) has five subunits: alpha(3), beta(3), gamma(1), delta(1), epsilon(1). F(0) has three main subunits: a(1), b(2) and c(10-14). The alpha and beta chains form an alternating ring which encloses part of the gamma chain. F(1) is attached to F(0) by a central stalk formed by the gamma and epsilon chains, while a peripheral stalk is formed by the delta and b chains.

Its subcellular location is the cell inner membrane. F(1)F(0) ATP synthase produces ATP from ADP in the presence of a proton or sodium gradient. F-type ATPases consist of two structural domains, F(1) containing the extramembraneous catalytic core and F(0) containing the membrane proton channel, linked together by a central stalk and a peripheral stalk. During catalysis, ATP synthesis in the catalytic domain of F(1) is coupled via a rotary mechanism of the central stalk subunits to proton translocation. In terms of biological role, component of the F(0) channel, it forms part of the peripheral stalk, linking F(1) to F(0). This is ATP synthase subunit b from Marinobacter nauticus (strain ATCC 700491 / DSM 11845 / VT8) (Marinobacter aquaeolei).